Consider the following 501-residue polypeptide: Archaemetzincin-1 (501 aa).

Position 261 (H261) interacts with Zn(2+). The Proton acceptor role is filled by E262. Residues H265, C272, C277, C296, and C299 each contribute to the Zn(2+) site. Positions 349 to 370 (DSGMGCESDTEPVTSPSEPVTP) are disordered.

This sequence belongs to the peptidase M54 family. The cofactor is Zn(2+).

Functionally, probable zinc metalloprotease. The protein is Archaemetzincin-1 (Amz1) of Rattus norvegicus (Rat).